The chain runs to 198 residues: Proteasome subunit beta 1 (198 aa).

Residues 1-8 constitute a propeptide, removed in mature form; by autocatalysis; it reads MSMYMPGA. Thr9 functions as the Nucleophile in the catalytic mechanism.

Belongs to the peptidase T1B family. In terms of assembly, the 20S proteasome core is composed of 14 alpha and 14 beta subunits that assemble into four stacked heptameric rings, resulting in a barrel-shaped structure. The two inner rings, each composed of seven catalytic beta subunits, are sandwiched by two outer rings, each composed of seven alpha subunits. The catalytic chamber with the active sites is on the inside of the barrel. Has a gated structure, the ends of the cylinder being occluded by the N-termini of the alpha-subunits. Is capped at one or both ends by the proteasome regulatory ATPase, PAN.

It localises to the cytoplasm. It carries out the reaction Cleavage of peptide bonds with very broad specificity.. Its activity is regulated as follows. The formation of the proteasomal ATPase PAN-20S proteasome complex, via the docking of the C-termini of PAN into the intersubunit pockets in the alpha-rings, triggers opening of the gate for substrate entry. Interconversion between the open-gate and close-gate conformations leads to a dynamic regulation of the 20S proteasome proteolysis activity. In terms of biological role, component of the proteasome core, a large protease complex with broad specificity involved in protein degradation. The protein is Proteasome subunit beta 1 of Nitrosopumilus maritimus (strain SCM1).